The sequence spans 328 residues: Phosphate acyltransferase (328 aa).

The protein belongs to the PlsX family. In terms of assembly, homodimer. Probably interacts with PlsY.

The protein localises to the cytoplasm. The enzyme catalyses a fatty acyl-[ACP] + phosphate = an acyl phosphate + holo-[ACP]. It functions in the pathway lipid metabolism; phospholipid metabolism. Catalyzes the reversible formation of acyl-phosphate (acyl-PO(4)) from acyl-[acyl-carrier-protein] (acyl-ACP). This enzyme utilizes acyl-ACP as fatty acyl donor, but not acyl-CoA. The chain is Phosphate acyltransferase from Mycoplasmoides gallisepticum (strain R(low / passage 15 / clone 2)) (Mycoplasma gallisepticum).